A 603-amino-acid polypeptide reads, in one-letter code: Leucine-rich repeat-containing protein 40 (603 aa).

The disordered stretch occupies residues 1 to 27 (MAAARRARAGDPRAGFRRAAEEQSPAV). 20 LRR repeats span residues 83–104 (DLTKLILASNQLRCLSEDVRLL), 106–127 (ALTVLDVHDNQLTSLPSALGQL), 129–150 (NLQKLDVSHNKLKSIPEELLQL), 152–173 (HLKGLLLQHNELSHLPDGFGQL), 175–196 (SLEELDLSNNHLTDIPKSFALL), 198–219 (NLVRLNLACNQLKDLPADISAM), 221–242 (SLRQLDCTKNYLESVPSELASM), 244–265 (SLEQLYLRKNKLRSLPELPSCK), 266–286 (LLKELHAGENQIEILNAENLK), 290–311 (SLSVLELRDNKIKSVPDEITLL), 313–335 (KLERLDLANNDISRLPYTLGNLS), 336–357 (QLKFLALEGNPLRTIRRDLLQK), 401–422 (TLKLLDYSEKQVAVIPDDVFSA), 427–449 (PVTSVNFSKNQLTAIPPRIVELK), 451–473 (SVCDVNFGFNKISSVSLELCTLH), 474–495 (KLTHLDIRNNVLTSLPEEMEAL), 497–518 (RLQVINLSFNRFKVFPSVLYRM), 520–541 (ALETILLSNNQVGSIDPLQLKK), 544–565 (QLGTLDLQNNDLLQVPPELGNC), and 567–588 (TLRTLLLEGNPFRTPRAAILAK).

The protein is Leucine-rich repeat-containing protein 40 (LRRC40) of Gallus gallus (Chicken).